Here is a 434-residue protein sequence, read N- to C-terminus: CC-adding tRNA nucleotidyltransferase (434 aa).

Gly19–Arg22 provides a ligand contact to CTP. 2 residues coordinate Mg(2+): Asp32 and Asp34. Residues Arg90–Asp91, Asn95, Asp130–Arg139, and Arg175 contribute to the CTP site.

The protein belongs to the tRNA nucleotidyltransferase/poly(A) polymerase family. The cofactor is Mg(2+).

The catalysed reaction is a tRNA precursor + 2 CTP = a tRNA with a 3' CC end + 2 diphosphate. TRNA nucleotidyltransferase involved in the synthesis of the tRNA CCA terminus. Adds the two cytidine residues to tRNA. The protein is CC-adding tRNA nucleotidyltransferase of Thermus thermophilus (strain ATCC BAA-163 / DSM 7039 / HB27).